Here is a 447-residue protein sequence, read N- to C-terminus: Alkylglycerol monooxygenase (447 aa).

The next 2 membrane-spanning stretches (helical) occupy residues Ala43–Gly63 and Trp111–Phe131. The Fatty acid hydroxylase domain occupies Phe119–Thr249. A Histidine box-1 motif is present at residues His132–His136. Residues His145–His149 carry the Histidine box-2 motif. Residues Ser170 to Ile190 form a helical membrane-spanning segment. Positions His221–His225 match the Histidine box-3 motif. 3 consecutive transmembrane segments (helical) span residues Val340–Leu360, Val363–Leu383, and Ile413–Val433.

This sequence belongs to the sterol desaturase family. TMEM195 subfamily. Requires Fe cation as cofactor. In terms of tissue distribution, highly expressed in lever and small intestine.

Its subcellular location is the endoplasmic reticulum membrane. The enzyme catalyses 1-O-(1,2-saturated-alkyl)-sn-glycerol + (6R)-L-erythro-5,6,7,8-tetrahydrobiopterin + O2 = a 1-(1-hydroxyalkyl)-sn-glycerol + (6R)-L-erythro-6,7-dihydrobiopterin + H2O. Functionally, glyceryl-ether monooxygenase that cleaves the O-alkyl bond of ether lipids. Ether lipids are essential components of brain membranes. The sequence is that of Alkylglycerol monooxygenase (Agmo) from Mus musculus (Mouse).